The following is a 236-amino-acid chain: Small ribosomal subunit protein uS2c (236 aa).

It belongs to the universal ribosomal protein uS2 family.

The protein resides in the plastid. The protein localises to the chloroplast. The sequence is that of Small ribosomal subunit protein uS2c (rps2) from Carica papaya (Papaya).